The sequence spans 231 residues: Flagellar L-ring protein (231 aa).

Residues 1 to 18 (MNRLMIVSLLGIATALGG) form the signal peptide. A lipid anchor (N-palmitoyl cysteine) is attached at cysteine 19. The S-diacylglycerol cysteine moiety is linked to residue cysteine 19. Residues 118 to 141 (LSLSAEYGGSRDAKGDSQAGQSNS) form a disordered region.

It belongs to the FlgH family. The basal body constitutes a major portion of the flagellar organelle and consists of four rings (L,P,S, and M) mounted on a central rod.

It localises to the cell outer membrane. Its subcellular location is the bacterial flagellum basal body. Assembles around the rod to form the L-ring and probably protects the motor/basal body from shearing forces during rotation. The protein is Flagellar L-ring protein of Pseudomonas aeruginosa (strain LESB58).